The chain runs to 579 residues: MLRYIIPRKKGTFVIAAFLTVAFFCIVAYHRNDRRRTKFQFPDIEKYAEELVRLPETWNGELHQIPNYTAPREGPGEKGKPVVLTGKDAELGQADMKKWFMNVHASDKISLDRDVPDPRIQACKDIKYDYAALPKTSVIIIFTDEAWTPLLRTVHSVINRSPPELLQEVILLDDNSKRQELQEPLDEHIKRFGGKVRLIRKHVRHGLIRAKLAGAREAVGDIIVFLDSHCEANHGWLEPIVQRISDERTAIVCPMIDSISDNTLAYHGDWSLSTGGFSWALHFTWEGLSEEEQKRRTKPTDYIRSPTMAGGLLAANREYFFEVGGYDEEMDIWGGENLEISFRAWMCGGSIEFIPCSHVGHIFRAGHPYNMTGRNNNKDVHGTNSKRLAEVWMDDYKRLYYMHREDLRTKDVGDLTARHELRKRLNCKPFKWFLDNIAKGKFIMDEDVVAYGALHTVVSGTRMCTDTLQRDEKMSQLLGVFHCQGKGSSPQLMSLSKEGNLRRENTCASEENGNIRMKTCSKKAQFNERWAYENKMIRNLKSGKCMSTANLKPGDNAIVVECDEKDEHQKWNFIDPAKA.

Residues 1-12 (MLRYIIPRKKGT) lie on the Cytoplasmic side of the membrane. Residues 13-30 (FVIAAFLTVAFFCIVAYH) traverse the membrane as a helical; Signal-anchor for type II membrane protein segment. Over 31–579 (RNDRRRTKFQ…KWNFIDPAKA (549 aa)) the chain is Lumenal. N-linked (GlcNAc...) asparagine glycosylation is present at Asn67. Cystine bridges form between Cys123–Cys356, Cys347–Cys427, Cys464–Cys483, Cys507–Cys520, and Cys545–Cys562. Residues 133 to 243 (LPKTSVIIIF…HGWLEPIVQR (111 aa)) form a catalytic subdomain A region. Substrate-binding residues include Asp174 and Arg204. A Mn(2+)-binding site is contributed by Asp227. Residue Ser228 coordinates substrate. Mn(2+) is bound at residue His229. Positions 302-364 (YIRSPTMAGG…PCSHVGHIFR (63 aa)) are catalytic subdomain B. Substrate is bound at residue Trp333. Position 361 (His361) interacts with Mn(2+). Substrate-binding residues include Arg364, His367, and Tyr369. N-linked (GlcNAc...) asparagine glycosylation occurs at Asn370. The Ricin B-type lectin domain occupies 450-574 (AYGALHTVVS…KDEHQKWNFI (125 aa)).

It belongs to the glycosyltransferase 2 family. GalNAc-T subfamily. Requires Mn(2+) as cofactor.

The protein localises to the golgi apparatus membrane. The protein operates within protein modification; protein glycosylation. In terms of biological role, probable glycopeptide transferase involved in O-linked oligosaccharide biosynthesis. Glycopeptide transferases catalyze the transfer of an N-acetyl-D-galactosamine residue to an already glycosylated peptide. In contrast to other members of the family, it does not act as a peptide transferase that transfers GalNAc onto serine or threonine residue on peptides that have been tested. Some peptide transferase activity is however not excluded, considering that its appropriate peptide substrate may remain unidentified. The chain is Probable N-acetylgalactosaminyltransferase 9 (gly-9) from Caenorhabditis elegans.